Here is a 479-residue protein sequence, read N- to C-terminus: Neuronal acetylcholine receptor subunit alpha-9 (479 aa).

Residues Met1 to Ala22 form the signal peptide. At Ala23–Ser238 the chain is on the extracellular side. N-linked (GlcNAc...) asparagine glycosylation is present at Asn57. Cys155 and Cys169 are oxidised to a cystine. The N-linked (GlcNAc...) asparagine glycan is linked to Asn170. The Na(+) site is built by Ser191 and Asp193. Cys219 and Cys220 are disulfide-bonded. A run of 3 helical transmembrane segments spans residues Phe239–Phe259, Val269–Ile289, and Tyr303–Ile323. Over His324–Arg457 the chain is Cytoplasmic. Residues Phe458–Ala478 form a helical membrane-spanning segment.

Belongs to the ligand-gated ion channel (TC 1.A.9) family. Acetylcholine receptor (TC 1.A.9.1) subfamily. Alpha-9/CHRNA9 sub-subfamily. Forms homo- or heteropentameric channels in conjunction with CHRNA10. The native outer hair cell receptor is composed of CHRNA9:CHRNA10 heterooligomers. Found in the stoichiometric form (CHRNA9)2:(CHRNA10)3. N-glycosylated. Expressed in cochlea, keratinocytes, pituitary gland, B-cells and T-cells.

The protein localises to the synaptic cell membrane. Its subcellular location is the cell membrane. It carries out the reaction Ca(2+)(in) = Ca(2+)(out). The catalysed reaction is K(+)(in) = K(+)(out). It catalyses the reaction Na(+)(in) = Na(+)(out). The enzyme catalyses Mg(2+)(in) = Mg(2+)(out). Activated by a myriad of ligands such as acetylcholine. AChR activity is inhibited by the antagonist alpha-conotoxins RgIA and GeXXA, small disulfide-constrained peptides from cone snails. Functionally, component of neuronal acetylcholine receptors (nAChRs) that function as pentameric, ligand-gated cation channels with high calcium permeability among other activities. nAChRs are excitatory neurotrasnmitter receptors formed by a collection of nAChR subunits known to mediate synaptic transmission in the nervous system and the neuromuscular junction. Each nAchR subunit confers differential attributes to channel properties, including activation, deactivation and desensitization kinetics, pH sensitivity, cation permeability, and binding to allosteric modulators. Forms either homopentamers or heteropentamers with CHRNA10. Expressed in the inner ear, in sympathetic neurons and in other non-neuronal cells, such as skin keratinocytes and lymphocytes. nAChR formed by CHRNA9:CHRNA10 mediate central nervous system control of auditory and vestibular sensory processing. The channel is permeable to a range of divalent cations including calcium, the influx of which may activate a potassium current which hyperpolarizes the cell membrane. In the ear, mediates synaptic transmission between efferent olivocochlear fibers and hair cells of the cochlea, this may lead to a reduction in basilar membrane motion, altering the activity of auditory nerve fibers and reducing the range of dynamic hearing. This may protect against acoustic trauma. May also regulate keratinocyte adhesion. The chain is Neuronal acetylcholine receptor subunit alpha-9 from Homo sapiens (Human).